A 406-amino-acid polypeptide reads, in one-letter code: NAC transcription factor NAM-1 (406 aa).

A compositionally biased stretch (polar residues) spans 1–11; the sequence is MGSPDSSSGSA. Positions 1–40 are disordered; the sequence is MGSPDSSSGSAQKPPRHQHQHQPPPPRRQGSAPELPPGFR. One can recognise an NAC domain in the interval 35–204; that stretch reads LPPGFRFHPT…DWVLCRIYKK (170 aa). Residues 137–210 mediate DNA binding; the sequence is VGVKKALVFY…IYKKTSKAAA (74 aa).

The protein resides in the nucleus. Transcription factor of the NAC family associated with the grain protein content (GPC). Accelerates senescence and increases nutrient remobilization from leaves to developing grains. Sequences of 11 European varieties of H.vulgare tested belongs to the same haplotype while the sequence found in H.spontaneum, an ancestor of the cultivated H.vulgare which has a higher GPC, belongs to an other haplotype. This Hordeum vulgare subsp. vulgare (Domesticated barley) protein is NAC transcription factor NAM-1 (NAM-1).